The sequence spans 64 residues: MAKLKTRRGAAKRFKATANGFKRKQAFKRHILTKKSAKRIRQLRGCVMVHVSDVASVRRMCPYI.

Belongs to the bacterial ribosomal protein bL35 family.

The sequence is that of Large ribosomal subunit protein bL35 from Acinetobacter baumannii (strain AB307-0294).